We begin with the raw amino-acid sequence, 401 residues long: S-adenosylmethionine synthase (401 aa).

Residue His15 participates in ATP binding. Asp17 contacts Mg(2+). Position 48 (Glu48) interacts with K(+). Residues Glu61 and Gln104 each coordinate L-methionine. Positions 104–114 are flexible loop; the sequence is QSPDIALGVDR. Residues 179 to 181, 246 to 247, Asp255, 261 to 262, Ala278, and Lys282 contribute to the ATP site; these read DGK, RF, and RK. Asp255 lines the L-methionine pocket. An L-methionine-binding site is contributed by Lys286.

This sequence belongs to the AdoMet synthase family. As to quaternary structure, homotetramer; dimer of dimers. Requires Mg(2+) as cofactor. It depends on K(+) as a cofactor.

It is found in the cytoplasm. It carries out the reaction L-methionine + ATP + H2O = S-adenosyl-L-methionine + phosphate + diphosphate. Its pathway is amino-acid biosynthesis; S-adenosyl-L-methionine biosynthesis; S-adenosyl-L-methionine from L-methionine: step 1/1. In terms of biological role, catalyzes the formation of S-adenosylmethionine (AdoMet) from methionine and ATP. The overall synthetic reaction is composed of two sequential steps, AdoMet formation and the subsequent tripolyphosphate hydrolysis which occurs prior to release of AdoMet from the enzyme. This Petrotoga mobilis (strain DSM 10674 / SJ95) protein is S-adenosylmethionine synthase.